A 158-amino-acid chain; its full sequence is GTP-dependent dephospho-CoA kinase (158 aa).

Residues Asp-35, Val-36, Asp-54, Lys-56, Glu-109, and Asp-132 each contribute to the GTP site.

It belongs to the GTP-dependent DPCK family.

It catalyses the reaction 3'-dephospho-CoA + GTP = GDP + CoA + H(+). The protein operates within cofactor biosynthesis; coenzyme A biosynthesis. Catalyzes the GTP-dependent phosphorylation of the 3'-hydroxyl group of dephosphocoenzyme A to form coenzyme A (CoA). This Methanococcus maripaludis (strain C5 / ATCC BAA-1333) protein is GTP-dependent dephospho-CoA kinase.